A 611-amino-acid polypeptide reads, in one-letter code: MNVQLPIKDAIGAIPTGERPGSRKVYQAGSLFPDIRVPFREVAVHPSANEPPVTIYDPSGPYTDPHAKIDIEQGLERSREPWIIARGDCELVATPREVKPEDNGFAQGKHLAPQFTAKRPIFKGAQGKLVTQLEYARAGIVTAEMEYVAIRENLRREQDRPCVRDGEDFGASIPDFVTPEFVRQEVARGRAIIPANINHGELEPMAIGRNFLVKINANIGNSAVLSTVADEVDKLVWATRWGADTVMDLSTGRNIHNIRDWIIRNSPVPIGTVPIYQALEKVNGVAEDLNWEVFRDTLIEQAEQGVDYFTIHAGVRLPFIPLTAKRVTGIVSRGGSIMAKWCLAHHKENFLYERFEDICEIMRSYDVSFSLGDGLRPGSTADANDEAQFAELRTLGELTKVAWKHGVQVMIEGPGHVAMHKIKANMDEQLKHCHEAPFYTLGPLTTDIAPGYDHITSAIGAAMIGWFGTAMLCYVTPKEHLGLPDRDDVKTGVITYKLAAHAADLAKGHPGAAMWDDAISRARFEFRWEDQFNLGLDPETARAFHDETLPKEAHKTAHFCSMCGPKFCSMKISQEVREFAAGMAPNSIEQGMAEMSDKFREQGSEIYLKTE.

Substrate is bound by residues N218, M247, Y276, H312, 332 to 334, 373 to 376, and E412; these read SRG and DGLR. Residue H416 coordinates Zn(2+). Y439 is a substrate binding site. H480 is a binding site for Zn(2+). Residues C560, C563, and C568 each contribute to the [4Fe-4S] cluster site.

Belongs to the ThiC family. Homodimer. Requires [4Fe-4S] cluster as cofactor.

It carries out the reaction 5-amino-1-(5-phospho-beta-D-ribosyl)imidazole + S-adenosyl-L-methionine = 4-amino-2-methyl-5-(phosphooxymethyl)pyrimidine + CO + 5'-deoxyadenosine + formate + L-methionine + 3 H(+). It participates in cofactor biosynthesis; thiamine diphosphate biosynthesis. In terms of biological role, catalyzes the synthesis of the hydroxymethylpyrimidine phosphate (HMP-P) moiety of thiamine from aminoimidazole ribotide (AIR) in a radical S-adenosyl-L-methionine (SAM)-dependent reaction. The polypeptide is Phosphomethylpyrimidine synthase (Caulobacter sp. (strain K31)).